The sequence spans 380 residues: Flap endonuclease 1 (380 aa).

Residues 1–104 (MGIQGLAKLI…GELAKRSERR (104 aa)) form an N-domain region. At Arg19 the chain carries Symmetric dimethylarginine; by PRMT5. Asp34 lines the Mg(2+) pocket. Arg47 and Arg70 together coordinate DNA. An N6-acetyllysine modification is found at Lys80. Asp86 is a Mg(2+) binding site. Arg100 and Arg104 each carry symmetric dimethylarginine; by PRMT5. An I-domain region spans residues 122-253 (EVEKFTKRLV…KRAVDLIQKH (132 aa)). Residues Glu158, Glu160, Asp179, and Asp181 each coordinate Mg(2+). Glu158 serves as a coordination point for DNA. Ser187 is subject to Phosphoserine; by CDK2. Arg192 bears the Symmetric dimethylarginine; by PRMT5 mark. Residue Ser197 is modified to Phosphoserine. Residues Gly231 and Asp233 each coordinate DNA. Position 233 (Asp233) interacts with Mg(2+). 3 positions are modified to phosphoserine: Ser255, Ser293, and Ser335. Residues 327 to 380 (RLSKSRQGSTQGRLDDFFKVTGSLSSAKRKEPEPKGAAKKKAKTGAAGKFKRGK) are disordered. Thr336 is subject to Phosphothreonine. The interaction with PCNA stretch occupies residues 336-344 (TQGRLDDFF). N6-acetyllysine occurs at positions 354, 375, 377, and 380. Residues 363–380 (AAKKKAKTGAAGKFKRGK) show a composition bias toward basic residues.

Belongs to the XPG/RAD2 endonuclease family. FEN1 subfamily. In terms of assembly, interacts with PCNA. Three molecules of FEN1 bind to one PCNA trimer with each molecule binding to one PCNA monomer. PCNA stimulates the nuclease activity without altering cleavage specificity. The C-terminal domain binds EP300; can bind simultaneously to both PCNA and EP300. Interacts with DDX11; this interaction is direct and increases flap endonuclease activity of FEN1. Interacts with WDR4; regulating its endonuclease activity. Interacts with POLB. Mg(2+) serves as cofactor. Post-translationally, acetylated by EP300. Acetylation inhibits both endonuclease and exonuclease activity. Acetylation also reduces DNA-binding activity but does not affect interaction with PCNA or EP300. In terms of processing, phosphorylation upon DNA damage induces relocalization to the nuclear plasma. Phosphorylation at Ser-187 by CDK2 occurs during late S-phase and results in dissociation from PCNA. Methylation at Arg-192 by PRMT5 impedes Ser-187 phosphorylation and increases interaction with PCNA.

The protein localises to the nucleus. It localises to the nucleolus. Its subcellular location is the nucleoplasm. The protein resides in the mitochondrion. Its function is as follows. Structure-specific nuclease with 5'-flap endonuclease and 5'-3' exonuclease activities involved in DNA replication and repair. During DNA replication, cleaves the 5'-overhanging flap structure that is generated by displacement synthesis when DNA polymerase encounters the 5'-end of a downstream Okazaki fragment. It enters the flap from the 5'-end and then tracks to cleave the flap base, leaving a nick for ligation. Also involved in the long patch base excision repair (LP-BER) pathway, by cleaving within the apurinic/apyrimidinic (AP) site-terminated flap. Acts as a genome stabilization factor that prevents flaps from equilibrating into structures that lead to duplications and deletions. Also possesses 5'-3' exonuclease activity on nicked or gapped double-stranded DNA, and exhibits RNase H activity. Also involved in replication and repair of rDNA and in repairing mitochondrial DNA. The sequence is that of Flap endonuclease 1 from Bos taurus (Bovine).